A 379-amino-acid chain; its full sequence is Cobalt-precorrin-5B C(1)-methyltransferase (379 aa).

Belongs to the CbiD family.

The catalysed reaction is Co-precorrin-5B + S-adenosyl-L-methionine = Co-precorrin-6A + S-adenosyl-L-homocysteine. The protein operates within cofactor biosynthesis; adenosylcobalamin biosynthesis; cob(II)yrinate a,c-diamide from sirohydrochlorin (anaerobic route): step 6/10. Functionally, catalyzes the methylation of C-1 in cobalt-precorrin-5B to form cobalt-precorrin-6A. This is Cobalt-precorrin-5B C(1)-methyltransferase from Salmonella choleraesuis (strain SC-B67).